A 242-amino-acid polypeptide reads, in one-letter code: Probable 2-phosphosulfolactate phosphatase (242 aa).

Belongs to the ComB family. Mg(2+) is required as a cofactor.

It carries out the reaction (2R)-O-phospho-3-sulfolactate + H2O = (2R)-3-sulfolactate + phosphate. This Picosynechococcus sp. (strain ATCC 27264 / PCC 7002 / PR-6) (Agmenellum quadruplicatum) protein is Probable 2-phosphosulfolactate phosphatase.